Here is a 198-residue protein sequence, read N- to C-terminus: Ribonuclease HII (198 aa).

An RNase H type-2 domain is found at 10 to 198 (QLVAGVDEVG…PVKRALGLAS (189 aa)). A divalent metal cation contacts are provided by aspartate 16, glutamate 17, and aspartate 108.

The protein belongs to the RNase HII family. Requires Mn(2+) as cofactor. Mg(2+) is required as a cofactor.

It is found in the cytoplasm. The catalysed reaction is Endonucleolytic cleavage to 5'-phosphomonoester.. Its function is as follows. Endonuclease that specifically degrades the RNA of RNA-DNA hybrids. This chain is Ribonuclease HII, found in Shigella boydii serotype 18 (strain CDC 3083-94 / BS512).